The primary structure comprises 528 residues: MSDYLLQMNGIVKTFDGVKALNGIDIKVRPGECVGLCGENGAGKSTLMKVLSAVYPYGTWEGEILWDGNPLKAQSISETEAAGIVIIHQELTLVPDLSVAENIFMGHELTLRGGRMNYPAMIHRAETLMRELKVPDMNVALPVSQYGGGHQQLVEIAKALNKQARLLILDEPSSALTRSEIEVLLGIIHDLKAKGVACVYISHKLDEVAAVCDTISVIRDGKHIATTAMAEMDIPKIITQMVGREMSNLYPTDAHDIGEVIFEARNITCYDVDNPKRKRVDDISFVLKRGEILGIAGLVGAGRTELVSALFGAYPGRYSGEVWLDGQPVDTRTPLKSIRAGLCMVPEDRKRQGIIPDMGVGQNITLAVLDNYSKMTRIDAEAELGSIDREISRMHLKTASPFLPITSLSGGNQQKAVLAKMLLTRPRVLILDEPTRGVDVGAKYEIYKLMGALAAEGVAIIMVSSELAEVLGVSDRVLVIGEGRLCGDFINHELTQEQVLAAALSHPGDPDSNDPANNNHNDNDRKTT.

2 consecutive ABC transporter domains span residues 6 to 245 (LQMN…VGRE) and 262 to 507 (FEAR…LSHP). Position 38-45 (38-45 (GENGAGKS)) interacts with ATP. The interval 504–528 (LSHPGDPDSNDPANNNHNDNDRKTT) is disordered.

This sequence belongs to the ABC transporter superfamily. Xylose importer (TC 3.A.1.2.4) family. As to quaternary structure, the complex is composed of two ATP-binding proteins (XylG), two transmembrane proteins (XylH) and a solute-binding protein (XylF).

The protein resides in the cell inner membrane. It catalyses the reaction D-xylose(out) + ATP + H2O = D-xylose(in) + ADP + phosphate + H(+). Its function is as follows. Part of the ABC transporter complex XylFGH involved in xylose import. Responsible for energy coupling to the transport system. The polypeptide is Xylose import ATP-binding protein XylG (Pseudomonas syringae pv. tomato (strain ATCC BAA-871 / DC3000)).